Here is a 193-residue protein sequence, read N- to C-terminus: MTVSTAPLLSASGLAILRGERVLFRGIGLTLQPGEAIVLRGANGAGKTTLLRMLAGLTRPEAGEIARPAAHHWIGHKEGIKPQETPRIHLALWAKAWGSSASIADILDQLALTRAADVPGRYLSAGQRRRTAFARLLLEARPLWLLDEPYTALDAAGKTMLDQVISGHLRTGGAIIASMHDAAGFPVTAEVTL.

One can recognise an ABC transporter domain in the interval 9–191 (LSASGLAILR…AAGFPVTAEV (183 aa)). Residue 41–48 (GANGAGKT) coordinates ATP.

It belongs to the ABC transporter superfamily. CcmA exporter (TC 3.A.1.107) family. As to quaternary structure, the complex is composed of two ATP-binding proteins (CcmA) and two transmembrane proteins (CcmB).

It is found in the cell inner membrane. It carries out the reaction heme b(in) + ATP + H2O = heme b(out) + ADP + phosphate + H(+). Functionally, part of the ABC transporter complex CcmAB involved in the biogenesis of c-type cytochromes; once thought to export heme, this seems not to be the case, but its exact role is uncertain. Responsible for energy coupling to the transport system. The chain is Cytochrome c biogenesis ATP-binding export protein CcmA from Hyphomonas neptunium (strain ATCC 15444).